The following is a 148-amino-acid chain: Calmodulin-related protein 97A (148 aa).

4 EF-hand domains span residues 7–42 (EQIA…LGQN), 43–78 (PTEA…QMRE), 80–115 (DTEE…LGEK), and 116–148 (VTDE…ISQK). Ca(2+) contacts are provided by Asp-20, Thr-24, Lys-26, Glu-31, Asn-58, Asn-60, Gln-62, Glu-67, Asp-93, Asp-95, Asp-97, Glu-104, Asp-129, Asp-131, Asp-133, Met-135, and Glu-140.

This sequence belongs to the calmodulin family.

Its function is as follows. May be involved in calcium-mediated signal transduction. In Drosophila melanogaster (Fruit fly), this protein is Calmodulin-related protein 97A (Acam).